The chain runs to 357 residues: DNA integrity scanning protein DisA (357 aa).

A DAC domain is found at 8–146 (VKSIINILQL…GNLRYTLKDI (139 aa)). ATP is bound by residues glycine 75, leucine 93, and 106–110 (MRHRT).

It belongs to the DisA family. As to quaternary structure, homooctamer. It depends on Mg(2+) as a cofactor.

The catalysed reaction is 2 ATP = 3',3'-c-di-AMP + 2 diphosphate. In terms of biological role, participates in a DNA-damage check-point that is active prior to asymmetric division when DNA is damaged. DisA forms globular foci that rapidly scan along the chromosomes during sporulation, searching for lesions. When a lesion is present, DisA pauses at the lesion site. This triggers a cellular response that culminates in a temporary block in sporulation initiation. Also has diadenylate cyclase activity, catalyzing the condensation of 2 ATP molecules into cyclic di-AMP (c-di-AMP). c-di-AMP acts as a signaling molecule that couples DNA integrity with progression of sporulation. The rise in c-di-AMP level generated by DisA while scanning the chromosome, operates as a positive signal that advances sporulation; upon encountering a lesion, the DisA focus arrests at the damaged site and halts c-di-AMP synthesis. The chain is DNA integrity scanning protein DisA from Bacillus cereus (strain B4264).